The chain runs to 565 residues: Liver carboxylesterase 1 (565 aa).

An N-terminal signal peptide occupies residues 1 to 18 (MWLCALSLISLTACLSLG). Cys87 and Cys116 form a disulfide bridge. The Acyl-ester intermediate role is filled by Ser221. A disulfide bond links Cys273 and Cys284. The active-site Charge relay system is the Glu353. Ser378 carries the post-translational modification Phosphoserine. Asn388 carries an N-linked (GlcNAc...) asparagine glycan. Catalysis depends on His466, which acts as the Charge relay system. Residue Asn489 is glycosylated (N-linked (GlcNAc...) asparagine).

The protein belongs to the type-B carboxylesterase/lipase family. As to quaternary structure, homotrimer and homohexamer. Binds to beta-glucuronidase. In terms of tissue distribution, detected in kidney, liver and lung.

Its subcellular location is the endoplasmic reticulum lumen. It localises to the cytoplasm. The protein resides in the lipid droplet. The enzyme catalyses a carboxylic ester + H2O = an alcohol + a carboxylate + H(+). The catalysed reaction is cholesteryl (9Z-octadecenoate) + H2O = cholesterol + (9Z)-octadecenoate + H(+). It catalyses the reaction 2-(5Z,8Z,11Z,14Z-eicosatetraenoyl)-glycerol + H2O = glycerol + (5Z,8Z,11Z,14Z)-eicosatetraenoate + H(+). It carries out the reaction prostaglandin E2 1-glyceryl ester + H2O = prostaglandin E2 + glycerol + H(+). The enzyme catalyses a cholesterol ester + H2O = cholesterol + a fatty acid + H(+). The catalysed reaction is prostaglandin F2alpha 1-glyceryl ester + H2O = prostaglandin F2alpha + glycerol + H(+). In terms of biological role, involved in the detoxification of xenobiotics and in the activation of ester and amide prodrugs. Hydrolyzes aromatic and aliphatic esters, but has no catalytic activity toward amides or a fatty acyl-CoA ester. Displays fatty acid ethyl ester synthase activity, catalyzing the ethyl esterification of oleic acid to ethyloleate. Converts monoacylglycerides to free fatty acids and glycerol. Hydrolyzes of 2-arachidonoylglycerol and prostaglandins. Hydrolyzes cellular cholesteryl esters to free cholesterols and promotes reverse cholesterol transport (RCT) by facilitating both the initial and final steps in the process. First of all, allows free cholesterol efflux from macrophages to extracellular cholesterol acceptors and secondly, releases free cholesterol from lipoprotein-delivered cholesteryl esters in the liver for bile acid synthesis or direct secretion into the bile. This is Liver carboxylesterase 1 from Mus musculus (Mouse).